The chain runs to 572 residues: DNA polymerase (572 aa).

The segment at Met-1–Ala-222 is 3'-5' exonuclease and strand displacement activities. The interaction with the primer terminal protein stretch occupies residues Tyr-56 to Phe-66. Mg(2+)-binding residues include Asp-142 and Asp-166. Residues Tyr-223 to Gly-226 are DNA-binding; Involved in the formation of a stable complex between TP and phi29 DNA polymerase. The segment at Phe-227–Lys-572 is initiation, polymerization and pyrophosphorolytic activities. Mg(2+)-binding residues include Asp-246 and Val-247. The 5-methyl-UTP site is built by Tyr-251, Lys-368, and Lys-380. 2 residues coordinate Mg(2+): Asp-453 and Asp-455. Position 455 (Asp-455) interacts with 5-methyl-UTP.

The protein belongs to the DNA polymerase type-B family. In terms of assembly, interacts with the primer terminal protein; this interaction allows the initiation of TP-primed DNA replication at both viral DNA ends. Interacts with DNA. Mg(2+) serves as cofactor.

It catalyses the reaction DNA(n) + a 2'-deoxyribonucleoside 5'-triphosphate = DNA(n+1) + diphosphate. Polymerase responsible for protein-primed viral DNA replication by strand displacement with high processivity and fidelity. To start replication, the DNA polymerase forms a heterodimer with a free primer terminal protein (TP), recognizes the replication origins at both 5' ends of the linear chromosome, and initiates replication using as primer the OH-group of Ser-232 of the TP. This polymerase possesses three enzymatic activities: DNA synthesis (polymerase), primer terminal protein (TP) deoxynucleotidylation, which is the formation of a covalent linkage (phosphoester) between the hydroxyl group of a specific serine residue in TP and 5'-dAMP, a reaction directed by the second T at the 3' end, and 3' to 5' exonuclease activity. Exonuclease activity has a proofreading purpose. In Bacillus subtilis (Bacteriophage PZA), this protein is DNA polymerase (2).